The sequence spans 614 residues: Probable NOT transcription complex subunit VIP2 (614 aa).

Disordered regions lie at residues 1–46 (MSNL…NLQG), 58–89 (NMQG…SSGR), and 361–391 (NLGA…GLRP). Over residues 364 to 381 (ATYSSHRPQQQPQHTSST) the composition is skewed to polar residues.

The protein belongs to the CNOT2/3/5 family. Interacts with Agrobacterium tumefaciens VirE2. Binds to VIP1. Forms a complex made of Agrobacterium VirE2, VIP1, VIP2 and single-stranded DNA (ssDNA).

It is found in the nucleus. Functionally, transcriptional regulator required for Agrobacterium-mediated stable genetic transformation by T-DNA integration in host genome, but not for T-DNA transient expression. The protein is Probable NOT transcription complex subunit VIP2 (VIP2) of Arabidopsis thaliana (Mouse-ear cress).